The following is a 257-amino-acid chain: UPF0246 protein BF4021 (257 aa).

Belongs to the UPF0246 family.

The protein is UPF0246 protein BF4021 of Bacteroides fragilis (strain YCH46).